The chain runs to 452 residues: Elongation factor Tu, mitochondrial (452 aa).

A mitochondrion-targeting transit peptide spans 1–43 (MAAATLLRATPLFSGLGAGPAPLLQGLLRPLKAQALPVLCRGL). One can recognise a tr-type G domain in the interval 55–251 (KPHVNVGTIG…AVDTYIPVPT (197 aa)). The tract at residues 64 to 71 (GHVDHGKT) is G1. Positions 67, 69, 70, 71, and 72 each coordinate GTP. Threonine 71 serves as a coordination point for Mg(2+). Lysine 79 carries the N6-acetyllysine modification. Lysine 88 is modified (N6-acetyllysine; alternate). An N6-succinyllysine; alternate modification is found at lysine 88. The tract at residues 105 to 109 (GITIN) is G2. The tract at residues 126 to 129 (DCPG) is G3. Asparagine 181, aspartate 184, serine 219, alanine 220, and leucine 221 together coordinate GTP. Residues 181 to 184 (NKAD) are G4. The interval 219 to 221 (SAL) is G5. Lysine 234 is subject to N6-succinyllysine. Position 256 is an N6-acetyllysine (lysine 256). Threonine 278 bears the Phosphothreonine mark. The residue at position 286 (lysine 286) is an N6-succinyllysine. Serine 312 bears the Phosphoserine mark. 2 positions are modified to N6-acetyllysine: lysine 361 and lysine 418.

Belongs to the TRAFAC class translation factor GTPase superfamily. Classic translation factor GTPase family. EF-Tu/EF-1A subfamily. As to quaternary structure, interacts with NLRX1. Interacts with ATG16L1.

It is found in the mitochondrion. It catalyses the reaction GTP + H2O = GDP + phosphate + H(+). Its function is as follows. GTP hydrolase that promotes the GTP-dependent binding of aminoacyl-tRNA to the A-site of ribosomes during protein biosynthesis. Also plays a role in the regulation of autophagy and innate immunity. Recruits ATG5-ATG12 and NLRX1 at mitochondria and serves as a checkpoint of the RIGI-MAVS pathway. In turn, inhibits RLR-mediated type I interferon while promoting autophagy. This is Elongation factor Tu, mitochondrial (TUFM) from Bos taurus (Bovine).